The following is a 31-amino-acid chain: Photosystem II reaction center protein T (31 aa).

The chain crosses the membrane as a helical span at residues 3–23 (ALVYTFLLISTLGIIFFGIFF).

It belongs to the PsbT family. As to quaternary structure, PSII is composed of 1 copy each of membrane proteins PsbA, PsbB, PsbC, PsbD, PsbE, PsbF, PsbH, PsbI, PsbJ, PsbK, PsbL, PsbM, PsbT, PsbY, PsbZ, Psb30/Ycf12, at least 3 peripheral proteins of the oxygen-evolving complex and a large number of cofactors. It forms dimeric complexes.

It localises to the plastid. It is found in the chloroplast thylakoid membrane. Found at the monomer-monomer interface of the photosystem II (PS II) dimer, plays a role in assembly and dimerization of PSII. PSII is a light-driven water plastoquinone oxidoreductase, using light energy to abstract electrons from H(2)O, generating a proton gradient subsequently used for ATP formation. The chain is Photosystem II reaction center protein T from Nephroselmis olivacea (Green alga).